The sequence spans 441 residues: Protein SPMIP7 (441 aa).

In terms of tissue distribution, testis specific. Expressed at the spermatid stage.

In terms of biological role, essential for normal spermatogenesis. This chain is Protein SPMIP7 (Spmip7), found in Mus musculus (Mouse).